A 579-amino-acid polypeptide reads, in one-letter code: Laccase-4 (579 aa).

The N-terminal stretch at 1-28 (MTMAISSALPSPLLLAASLLLLIVQAQG) is a signal peptide. Plastocyanin-like domains follow at residues 36–152 (NVQM…PKLG) and 162–316 (KEVP…YENP). N-linked (GlcNAc...) asparagine glycans are attached at residues N41 and N82. Positions 86 and 88 each coordinate Cu cation. A glycan (N-linked (GlcNAc...) asparagine) is linked at N118. 2 residues coordinate Cu cation: H131 and H133. N191, N207, N243, N304, N340, N347, N386, N393, N403, N439, N446, and N462 each carry an N-linked (GlcNAc...) asparagine glycan. The Plastocyanin-like 3 domain occupies 429-563 (DFPVAPLSPF…RMAWLVLDGS (135 aa)). 7 residues coordinate Cu cation: H480, H483, H485, H542, C543, H544, and H548.

This sequence belongs to the multicopper oxidase family. It depends on Cu cation as a cofactor.

It is found in the secreted. The protein resides in the extracellular space. The protein localises to the apoplast. The catalysed reaction is 4 hydroquinone + O2 = 4 benzosemiquinone + 2 H2O. Lignin degradation and detoxification of lignin-derived products. This is Laccase-4 (LAC4) from Oryza sativa subsp. japonica (Rice).